The sequence spans 285 residues: 2-dehydro-3-deoxyphosphooctonate aldolase (285 aa).

The protein belongs to the KdsA family.

Its subcellular location is the cytoplasm. The catalysed reaction is D-arabinose 5-phosphate + phosphoenolpyruvate + H2O = 3-deoxy-alpha-D-manno-2-octulosonate-8-phosphate + phosphate. It functions in the pathway carbohydrate biosynthesis; 3-deoxy-D-manno-octulosonate biosynthesis; 3-deoxy-D-manno-octulosonate from D-ribulose 5-phosphate: step 2/3. It participates in bacterial outer membrane biogenesis; lipopolysaccharide biosynthesis. This is 2-dehydro-3-deoxyphosphooctonate aldolase from Polaromonas naphthalenivorans (strain CJ2).